A 368-amino-acid polypeptide reads, in one-letter code: Germination protease (368 aa).

A propeptide spanning residues 1–15 is cleaved from the precursor; that stretch reads MKEPLDLSKYSVRTD.

This sequence belongs to the peptidase A25 family. Homotetramer. Post-translationally, autoproteolytically processed. The inactive tetrameric zymogen termed p46 autoprocesses to a smaller form termed p41, which is active only during spore germination.

The catalysed reaction is Endopeptidase action with P4 Glu or Asp, P1 preferably Glu &gt; Asp, P1' hydrophobic and P2' Ala.. Functionally, initiates the rapid degradation of small, acid-soluble proteins during spore germination. This is Germination protease from Bacillus anthracis (strain A0248).